Here is a 418-residue protein sequence, read N- to C-terminus: Gamma-glutamyl phosphate reductase (418 aa).

This sequence belongs to the gamma-glutamyl phosphate reductase family.

It localises to the cytoplasm. The enzyme catalyses L-glutamate 5-semialdehyde + phosphate + NADP(+) = L-glutamyl 5-phosphate + NADPH + H(+). It participates in amino-acid biosynthesis; L-proline biosynthesis; L-glutamate 5-semialdehyde from L-glutamate: step 2/2. Functionally, catalyzes the NADPH-dependent reduction of L-glutamate 5-phosphate into L-glutamate 5-semialdehyde and phosphate. The product spontaneously undergoes cyclization to form 1-pyrroline-5-carboxylate. The chain is Gamma-glutamyl phosphate reductase from Parafrankia sp. (strain EAN1pec).